A 300-amino-acid polypeptide reads, in one-letter code: GTP cyclohydrolase FolE2 (300 aa).

Belongs to the GTP cyclohydrolase IV family.

It carries out the reaction GTP + H2O = 7,8-dihydroneopterin 3'-triphosphate + formate + H(+). Its pathway is cofactor biosynthesis; 7,8-dihydroneopterin triphosphate biosynthesis; 7,8-dihydroneopterin triphosphate from GTP: step 1/1. In terms of biological role, converts GTP to 7,8-dihydroneopterin triphosphate. This Bacillus licheniformis (strain ATCC 14580 / DSM 13 / JCM 2505 / CCUG 7422 / NBRC 12200 / NCIMB 9375 / NCTC 10341 / NRRL NRS-1264 / Gibson 46) protein is GTP cyclohydrolase FolE2.